The primary structure comprises 936 residues: MSRFYRQGSSSESSSESSSDSDVQVKKPTRYVSSSEDEIEEKRIVLSAKDKIWQQFDESLKKVRNALKTNDWVSTTSEFDNMTKLITNGKTTRIIEKEGFPPSFIKALFIIQTSHRDLTTEQKKKLHANNNKSYNSIKQKLKKTCDLYAKELKPYHDNPALVNEQENKANSDDDDDDLSESESEESESSDDDKGKGKGKAAFGKKPATKAVVAKKPLTKKGDDDSESESEESESESEELISESWSSDSDDDSDSDSDDDSGDNKWMIKDDKKVVAKASVTTVRKTDKDKLDRRNAVVSPLSGSGSAVPTAGEGEGEKLTQDQIMKKVKEVISNRGKLKTDPMKQIQQLEYFYSLIQGDKETFIVLYELIAAQFDTASVKVALSIPVWQKVADGIKKLLEILETNTNFVLVLEHQEPTISKGQVAVTGNLLALFEMLDDEFSKSLQSINYPTKEYLDRLQDEQIILDLGESLQKYYESAGNNGAAAKIAIRRIEHIYYKSSNLKNNIIPSTMPLSEQITLMSKLSSFVYKFGDERLNARTILCNIYFNAINNKFHEARDMMLMSHLQDNPTLMDVSTQILFNRAMVQLGLCAFRCGYIQEAQNCVVEFSGLRKDLLAQGLSVQSKTAEKDTVREVEETTRILPAHMWIPIDLIETVNLISGMLIAVPQNAYRPFDNKFKTCKFYQRHMDSVDRQIFIAPSETSKDIIYQASKALSAGDWQQCLEHVNTLRFWSLIPDIDSVREKLTRIVQEVSLKTFLFTYSTSYDSILLSELADRFHLPKSQVHSIVAKMMNNHEISASMEHSTESITFRAEQTKLQYLALHYSESLVDFVEQNERIYDVKFGTSYRKKGDNDHLPIAGGQHHGHQHHGHQHHGHHHHNQQQQQHHQQQQQTTQHHHHHHQNQNQGNQQYQNKKHHNSNQQKSHKKRQNNSLVVNN.

Disordered regions lie at residues 1–38 (MSRF…SEDE), 156–265 (HDNP…DNKW), and 283–317 (RKTD…EGEK). Residues 9 to 22 (SSSESSSESSSDSD) are compositionally biased toward low complexity. Over residues 172–190 (DDDDDDLSESESEESESSD) the composition is skewed to acidic residues. The segment covering 199-215 (KAAFGKKPATKAVVAKK) has biased composition (low complexity). 2 stretches are compositionally biased toward acidic residues: residues 223–240 (DDSE…EELI) and 247–260 (DSDD…DDDS). Residues 283–294 (RKTDKDKLDRRN) are compositionally biased toward basic and acidic residues. The 172-residue stretch at 643–814 (AHMWIPIDLI…ESITFRAEQT (172 aa)) folds into the PCI domain. A disordered region spans residues 845-936 (SYRKKGDNDH…RQNNSLVVNN (92 aa)). Over residues 862–879 (HHGHQHHGHQHHGHHHHN) the composition is skewed to basic residues. 2 stretches are compositionally biased toward low complexity: residues 880-893 (QQQQ…QQTT) and 902-911 (NQNQGNQQYQ). A compositionally biased stretch (basic residues) spans 912–928 (NKKHHNSNQQKSHKKRQ).

It belongs to the eIF-3 subunit C family. As to quaternary structure, component of the eukaryotic translation initiation factor 3 (eIF-3) complex.

It is found in the cytoplasm. In terms of biological role, component of the eukaryotic translation initiation factor 3 (eIF-3) complex, which is involved in protein synthesis of a specialized repertoire of mRNAs and, together with other initiation factors, stimulates binding of mRNA and methionyl-tRNAi to the 40S ribosome. The eIF-3 complex specifically targets and initiates translation of a subset of mRNAs involved in cell proliferation. This is Eukaryotic translation initiation factor 3 subunit C (eif3C) from Dictyostelium discoideum (Social amoeba).